Consider the following 459-residue polypeptide: Argininosuccinate lyase (459 aa).

The segment at 440 to 459 (DEKKLEELRQNENRDNVYNP) is disordered.

It belongs to the lyase 1 family. Argininosuccinate lyase subfamily.

Its subcellular location is the cytoplasm. It carries out the reaction 2-(N(omega)-L-arginino)succinate = fumarate + L-arginine. It participates in amino-acid biosynthesis; L-arginine biosynthesis; L-arginine from L-ornithine and carbamoyl phosphate: step 3/3. This Pyrococcus furiosus (strain ATCC 43587 / DSM 3638 / JCM 8422 / Vc1) protein is Argininosuccinate lyase.